Here is a 325-residue protein sequence, read N- to C-terminus: MSWISPELIEILLTILKAVVILLVVVTCGAFMSFGERRLLGLFQNRYGPNRVGWGGSLQLVADMIKMFFKEDWIPKFSDRVIFTLAPMIAFTSLLLAFAIVPVSPGWVVADLNIGILFFLMMAGLAVYAVLFAGWSSNNKYSLLGAMRASAQTLSYEVFLGLSLMGVVAQAGSFNMTDIVNSQAHVWNVIPQFFGFITFAIAGVAVCHRHPFDQPEAEQELADGYHIEYSGMKFGLFFVGEYIGIVTISALMVTLFFGGWQGPLLPPFIWFALKTAFFMMMFILIRASLPRPRYDQVMSFGWKICLPLTLINLLVTAAVILWQAQ.

8 helical membrane passes run 11-31, 81-101, 114-134, 154-174, 186-206, 237-257, 265-285, and 304-324; these read ILLT…CGAF, VIFT…FAIV, IGIL…LFAG, LSYE…AGSF, VWNV…GVAV, FFVG…TLFF, LPPF…FILI, and ICLP…LWQA.

It belongs to the complex I subunit 1 family. In terms of assembly, NDH-1 is composed of 13 different subunits. Subunits NuoA, H, J, K, L, M, N constitute the membrane sector of the complex.

The protein resides in the cell inner membrane. It catalyses the reaction a quinone + NADH + 5 H(+)(in) = a quinol + NAD(+) + 4 H(+)(out). NDH-1 shuttles electrons from NADH, via FMN and iron-sulfur (Fe-S) centers, to quinones in the respiratory chain. The immediate electron acceptor for the enzyme in this species is believed to be ubiquinone. Couples the redox reaction to proton translocation (for every two electrons transferred, four hydrogen ions are translocated across the cytoplasmic membrane), and thus conserves the redox energy in a proton gradient. This subunit may bind ubiquinone. The polypeptide is NADH-quinone oxidoreductase subunit H (Escherichia coli O139:H28 (strain E24377A / ETEC)).